Reading from the N-terminus, the 361-residue chain is ATP phosphoribosyltransferase regulatory subunit (361 aa).

The protein belongs to the class-II aminoacyl-tRNA synthetase family. HisZ subfamily. Heteromultimer composed of HisG and HisZ subunits.

It is found in the cytoplasm. It functions in the pathway amino-acid biosynthesis; L-histidine biosynthesis; L-histidine from 5-phospho-alpha-D-ribose 1-diphosphate: step 1/9. Required for the first step of histidine biosynthesis. May allow the feedback regulation of ATP phosphoribosyltransferase activity by histidine. The polypeptide is ATP phosphoribosyltransferase regulatory subunit (Thermus thermophilus (strain ATCC 27634 / DSM 579 / HB8)).